The chain runs to 210 residues: MAAPAPRARTGGKKKDERRGFKGYKWEFRDSNKDFWAQGHAECKSLIMILLIAAMVCFQRVATHPIVILLLTMELSICAFFFFLYSLAINRYIPFVFWPMMDLMNDLACSTFLIGGIFFALEARRELPVPYLTGMILMGVTAFISIIDLCLQRRQFKSRKLRKFILLTPDRKGKKQDPKLLLMLAAKEDEEERQRELAEKAKRESMDPGW.

The next 4 membrane-spanning stretches (helical) occupy residues Phe-35–Met-55, Pro-65–Tyr-85, Leu-103–Ala-123, and Leu-127–Ile-147. In terms of domain architecture, MARVEL spans Phe-35–Lys-157.

It belongs to the chemokine-like factor family.

The protein resides in the membrane. This Mus musculus (Mouse) protein is CKLF-like MARVEL transmembrane domain-containing protein 2B (Cmtm2b).